Here is an 85-residue protein sequence, read N- to C-terminus: MAQKKGGGSTRNGRDSKPKMLGVKAYGGELISAGSIIVRQRGTRIHPGVNVGVGKDHTLFALVDGHVSFGTKGALSKHTVSVTPA.

A compositionally biased stretch (gly residues) spans 1–10; sequence MAQKKGGGST. A disordered region spans residues 1-20; that stretch reads MAQKKGGGSTRNGRDSKPKM.

This sequence belongs to the bacterial ribosomal protein bL27 family.

In Acidovorax ebreus (strain TPSY) (Diaphorobacter sp. (strain TPSY)), this protein is Large ribosomal subunit protein bL27.